We begin with the raw amino-acid sequence, 261 residues long: Probable septum site-determining protein MinC (261 aa).

Positions 106-144 (RAPAAKPADEAEPAAVPAVETAAAPAAAAAPEQSSDPAP) are disordered. The span at 118-144 (PAAVPAVETAAAPAAAAAPEQSSDPAP) shows a compositional bias: low complexity.

Belongs to the MinC family. As to quaternary structure, interacts with MinD and FtsZ.

Functionally, cell division inhibitor that blocks the formation of polar Z ring septums. Rapidly oscillates between the poles of the cell to destabilize FtsZ filaments that have formed before they mature into polar Z rings. Prevents FtsZ polymerization. This is Probable septum site-determining protein MinC from Burkholderia orbicola (strain MC0-3).